The chain runs to 475 residues: Aspartyl/glutamyl-tRNA(Asn/Gln) amidotransferase subunit B (475 aa).

It belongs to the GatB/GatE family. GatB subfamily. In terms of assembly, heterotrimer of A, B and C subunits.

It carries out the reaction L-glutamyl-tRNA(Gln) + L-glutamine + ATP + H2O = L-glutaminyl-tRNA(Gln) + L-glutamate + ADP + phosphate + H(+). The enzyme catalyses L-aspartyl-tRNA(Asn) + L-glutamine + ATP + H2O = L-asparaginyl-tRNA(Asn) + L-glutamate + ADP + phosphate + 2 H(+). In terms of biological role, allows the formation of correctly charged Asn-tRNA(Asn) or Gln-tRNA(Gln) through the transamidation of misacylated Asp-tRNA(Asn) or Glu-tRNA(Gln) in organisms which lack either or both of asparaginyl-tRNA or glutaminyl-tRNA synthetases. The reaction takes place in the presence of glutamine and ATP through an activated phospho-Asp-tRNA(Asn) or phospho-Glu-tRNA(Gln). This is Aspartyl/glutamyl-tRNA(Asn/Gln) amidotransferase subunit B from Bacillus anthracis (strain A0248).